Consider the following 465-residue polypeptide: Argininosuccinate lyase (465 aa).

It belongs to the lyase 1 family. Argininosuccinate lyase subfamily.

It localises to the cytoplasm. The enzyme catalyses 2-(N(omega)-L-arginino)succinate = fumarate + L-arginine. It participates in amino-acid biosynthesis; L-arginine biosynthesis; L-arginine from L-ornithine and carbamoyl phosphate: step 3/3. The protein is Argininosuccinate lyase of Hyphomonas neptunium (strain ATCC 15444).